We begin with the raw amino-acid sequence, 556 residues long: Formate--tetrahydrofolate ligase (556 aa).

Residue 65–72 (TPAGEGKS) coordinates ATP.

The protein belongs to the formate--tetrahydrofolate ligase family.

It catalyses the reaction (6S)-5,6,7,8-tetrahydrofolate + formate + ATP = (6R)-10-formyltetrahydrofolate + ADP + phosphate. The protein operates within one-carbon metabolism; tetrahydrofolate interconversion. In Streptococcus pneumoniae (strain Hungary19A-6), this protein is Formate--tetrahydrofolate ligase.